A 106-amino-acid chain; its full sequence is Small ribosomal subunit protein bS16 (106 aa).

Belongs to the bacterial ribosomal protein bS16 family.

This chain is Small ribosomal subunit protein bS16, found in Wolbachia sp. subsp. Brugia malayi (strain TRS).